We begin with the raw amino-acid sequence, 439 residues long: Microfibrillar-associated protein 1 (439 aa).

Disordered stretches follow at residues 1 to 27 (MSVP…NEKG) and 39 to 200 (YVSG…PRLK). Serine 2 is subject to N-acetylserine. A phosphoserine mark is found at serine 52 and serine 53. Residues 61-70 (QFIKKAKEQE) show a composition bias toward basic and acidic residues. Residue lysine 67 forms a Glycyl lysine isopeptide (Lys-Gly) (interchain with G-Cter in SUMO2) linkage. Positions 71–81 (AEPEEQEEDSS) are enriched in acidic residues. Phosphoserine is present on residues serine 94, serine 116, serine 118, serine 132, and serine 133. Acidic residues-rich tracts occupy residues 112–122 (VVGESDSEVEG) and 131–144 (DSSE…DDEE). The span at 145–163 (IERRRGMMRQRAQERKNEE) shows a compositional bias: basic and acidic residues. Positions 178–195 (ESESESEYEEYTDSEDEM) are enriched in acidic residues. Residue lysine 249 forms a Glycyl lysine isopeptide (Lys-Gly) (interchain with G-Cter in SUMO2) linkage. Threonine 267 carries the phosphothreonine modification. Lysine 357 is covalently cross-linked (Glycyl lysine isopeptide (Lys-Gly) (interchain with G-Cter in SUMO2)). Phosphoserine is present on serine 361. Residues lysine 371, lysine 381, lysine 415, and lysine 418 each participate in a glycyl lysine isopeptide (Lys-Gly) (interchain with G-Cter in SUMO2) cross-link. A Phosphoserine modification is found at serine 432.

It belongs to the MFAP1 family. In terms of assembly, component of the spliceosome B complex. Interacts with PRPF38A (via N-terminal interaction domain).

It localises to the nucleus. Functionally, involved in pre-mRNA splicing as a component of the spliceosome. The polypeptide is Microfibrillar-associated protein 1 (Homo sapiens (Human)).